Consider the following 347-residue polypeptide: Olfactory receptor 6J1 (347 aa).

Residues 1 to 24 are Extracellular-facing; the sequence is MGNWTAAVTEFVLLGFSLSREVEL. A glycan (N-linked (GlcNAc...) asparagine) is linked at Asn3. Residues 25 to 45 traverse the membrane as a helical segment; the sequence is LLLVLLLPTFLLTLLGNLLII. The Cytoplasmic portion of the chain corresponds to 46–53; sequence STVLSCSR. A helical transmembrane segment spans residues 54–74; it reads LHTPMYFFLCNLSILDILFTS. The Extracellular portion of the chain corresponds to 75 to 98; that stretch reads VISPKVLANLGSRDKTISFAGCIT. Cys96 and Cys188 are disulfide-bonded. A helical transmembrane segment spans residues 99–119; that stretch reads QCYFYFFLGTVEFLLLTVMSY. Topologically, residues 120–138 are cytoplasmic; the sequence is DRYATICCPLRYTTIMRPS. Residues 139–159 form a helical membrane-spanning segment; that stretch reads VCIGTVVFSWVGGFLSVLFPT. Over 160-196 the chain is Extracellular; it reads ILISQLPFCGSNIINHFFCDSGPLLALACADTTAIEL. The chain crosses the membrane as a helical span at residues 197-216; it reads MDFMLSSMVILCCIVLVAYS. At 217–236 the chain is on the cytoplasmic side; the sequence is YTYIILTIVRIPSASGRKKA. The helical transmembrane segment at 237 to 257 threads the bilayer; that stretch reads FNTCASHLTIVIISSGITVFI. Topologically, residues 258-270 are extracellular; it reads YVTPSQKEYLEIN. Residues 271 to 291 traverse the membrane as a helical segment; the sequence is KIPLVLSSVVTPFLNPFIYTL. Over 292 to 347 the chain is Cytoplasmic; that stretch reads RNDTVQGVLRDVWVRVRGVFEKRMRAVLRSRLSSNKDHQGRACSSPPCVYSVKLQC.

It belongs to the G-protein coupled receptor 1 family.

It localises to the cell membrane. Functionally, odorant receptor. This is Olfactory receptor 6J1 (OR6J1) from Homo sapiens (Human).